The primary structure comprises 787 residues: Dolichyl-diphosphooligosaccharide--protein glycosyltransferase subunit STT3A (787 aa).

The Cytoplasmic portion of the chain corresponds to M1–N18. Residues A19–I39 form a helical membrane-spanning segment. Residues R40–T125 are Lumenal-facing. Residues E53 to D55 carry the DXD motif 1 motif. Position 55 (D55) interacts with Mn(2+). Residues A126–A144 traverse the membrane as a helical segment. The Cytoplasmic segment spans residues K145–G146. Residues T147 to I164 traverse the membrane as a helical segment. The Lumenal segment spans residues S165 to E175. Residues D173 and E175 each coordinate Mn(2+). The DXD motif 2 signature appears at D173–E175. A helical transmembrane segment spans residues A176–T195. Over G196–S197 the chain is Cytoplasmic. Residues L198–V212 form a helical membrane-spanning segment. Residues C213–G217 lie on the Lumenal side of the membrane. Residues Y218–V234 traverse the membrane as a helical segment. Residues T235 to S239 lie on the Cytoplasmic side of the membrane. The helical transmembrane segment at S240–F265 threads the bilayer. Residues N266 to H273 lie on the Lumenal side of the membrane. Residues F274–K293 form a helical membrane-spanning segment. At G294–T306 the chain is on the cytoplasmic side. A helical membrane pass occupies residues L307 to V327. The Lumenal portion of the chain corresponds to A328 to T365. The short motif at S357–E360 is the SVSE motif element. A helical transmembrane segment spans residues W366 to F388. Over L389 to A394 the chain is Cytoplasmic. A helical membrane pass occupies residues S395–V411. At M412–L415 the chain is on the lumenal side. Residue R414 participates in dolichyl diphosphooligosaccharide binding. Residues M416–V437 traverse the membrane as a helical segment. Residues L438–S525 lie on the Cytoplasmic side of the membrane. A compositionally biased stretch (low complexity) spans S453–A475. Residues S453–V507 are disordered. Residues N477 to A504 show a composition bias toward basic and acidic residues. Residues V526–A546 traverse the membrane as a helical segment. Residues A547–Q787 are Lumenal-facing. Residues W592–D594 are interacts with target acceptor peptide in protein substrate. The WWDYG motif signature appears at W592–G596. Y597 serves as a coordination point for dolichyl diphosphooligosaccharide. 2 N-linked (GlcNAc...) asparagine glycosylation sites follow: N604 and N611. N-linked (GlcNAc...) (high mannose) asparagine glycosylation occurs at N615. The DK motif motif lies at D659–M666. Over residues R759 to S769 the composition is skewed to basic residues. Positions R759 to Q787 are disordered.

Belongs to the STT3 family. Component of the oligosaccharyltransferase (OST) complex. The cofactor is Mg(2+). Mn(2+) serves as cofactor.

The protein resides in the endoplasmic reticulum membrane. It catalyses the reaction a di-trans,poly-cis-dolichyl diphosphooligosaccharide + L-asparaginyl-[protein] = N(4)-(oligosaccharide-(1-&gt;4)-N-acetyl-beta-D-glucosaminyl-(1-&gt;4)-N-acetyl-beta-D-glucosaminyl)-L-asparaginyl-[protein] + a di-trans,poly-cis-dolichyl diphosphate + H(+). Its pathway is protein modification; protein glycosylation. Catalytic subunit of the oligosaccharyl transferase (OST) complex that catalyzes the initial transfer of a defined glycan (Glc(3)Man(9)GlcNAc(2) in eukaryotes) from the lipid carrier dolichol-pyrophosphate to an asparagine residue within an Asn-X-Ser/Thr consensus motif in nascent polypeptide chains, the first step in protein N-glycosylation. N-glycosylation occurs cotranslationally and the complex associates with the Sec61 complex at the channel-forming translocon complex that mediates protein translocation across the endoplasmic reticulum (ER). All subunits are required for a maximal enzyme activity. This subunit contains the active site and the acceptor peptide and donor lipid-linked oligosaccharide (LLO) binding pockets. This is Dolichyl-diphosphooligosaccharide--protein glycosyltransferase subunit STT3A (STT3A) from Oryza sativa subsp. japonica (Rice).